Reading from the N-terminus, the 183-residue chain is Peptidyl-prolyl cis-trans isomerase 11 (183 aa).

The PPIase cyclophilin-type domain maps to 20–182 (FLEVTAGGAP…LPIVVVQCGQ (163 aa)).

This sequence belongs to the cyclophilin-type PPIase family. PPIase H subfamily.

It catalyses the reaction [protein]-peptidylproline (omega=180) = [protein]-peptidylproline (omega=0). Its function is as follows. PPIases accelerate the folding of proteins. It catalyzes the cis-trans isomerization of proline imidic peptide bonds in oligopeptides. The sequence is that of Peptidyl-prolyl cis-trans isomerase 11 (cyn-11) from Caenorhabditis elegans.